The following is a 312-amino-acid chain: uncharacterized protein (312 aa).

Transmembrane regions (helical) follow at residues 4–24, 45–65, 75–95, 117–137, 171–191, 217–237, 253–275, and 280–299; these read IFLA…KVIF, LITP…PLVL, IAGI…AVML, VILA…NLIW, GLGV…IQFL, TSMT…GVMI, AFIF…PLGI, and LLLI…AHTW.

The protein localises to the cell membrane. This is an uncharacterized protein from Bacillus subtilis (strain 168).